A 246-amino-acid polypeptide reads, in one-letter code: MAGPAQAGVELIRDGRRHDGRLPEDLRPVRMQVGILHNADGSALVEFGRTRVLAAVYGPREPHQRFYVLPDRAALRVRYHMAPFSTDERKSPAPSRREIELSKVVREALEPVVLAEEFPRTVIDVFLEVLQADGGTRTAAVTAASLALADAGIPMRALVGGVAVGKIQGVLVVDVDELEDMYGEADMPVAAAPDIGEITLLQLNGVLTGEEFRTALAMALRAIDRVVEMEKEAIRKSYLEVGGGQE.

It belongs to the RNase PH family. Rrp41 subfamily. Component of the archaeal exosome complex. Forms a hexameric ring-like arrangement composed of 3 Rrp41-Rrp42 heterodimers. The hexameric ring associates with a trimer of Rrp4 and/or Csl4 subunits.

The protein localises to the cytoplasm. In terms of biological role, catalytic component of the exosome, which is a complex involved in RNA degradation. Has 3'-&gt;5' exoribonuclease activity. Can also synthesize heteromeric RNA-tails. The chain is Exosome complex component Rrp41 from Aeropyrum pernix (strain ATCC 700893 / DSM 11879 / JCM 9820 / NBRC 100138 / K1).